The chain runs to 173 residues: NADH-ubiquinone oxidoreductase chain 6 (173 aa).

5 helical membrane passes run 1-21 (MTYF…AVAS), 27-47 (YGVV…LSLG), 48-68 (VSFV…VVFV), 87-107 (VVGY…VGGF), and 139-159 (CGVG…FVVL).

The protein belongs to the complex I subunit 6 family.

The protein resides in the mitochondrion membrane. The enzyme catalyses a ubiquinone + NADH + 5 H(+)(in) = a ubiquinol + NAD(+) + 4 H(+)(out). Functionally, core subunit of the mitochondrial membrane respiratory chain NADH dehydrogenase (Complex I) that is believed to belong to the minimal assembly required for catalysis. Complex I functions in the transfer of electrons from NADH to the respiratory chain. The immediate electron acceptor for the enzyme is believed to be ubiquinone. This Aethia pygmaea (Whiskered auklet) protein is NADH-ubiquinone oxidoreductase chain 6 (MT-ND6).